The chain runs to 463 residues: Putative pentatricopeptide repeat-containing protein At4g17915 (463 aa).

PPR repeat units lie at residues 12-46 (STRLLNICVDSLCKFRKLEKAESLIIDGIRLGVDP), 47-81 (DVVTYNTLISGYCRFVGIEEAYAVTRRMRDAGIRP), 82-116 (DVATYNSLIAGAARRLMLDHVLYLFDEMLEWGIYP), 117-152 (DLWSYNTLMCCYFKLGKHEEAFRVLYKDLQLAGLNP), 153-186 (GPDTYNVLLDALCKCGYIDNALELFKEMQSRFKP), 187-221 (ELMTYNILINGLCKSRRVGTAKWMLTELKKSGYTP), 222-256 (NAVTYTTILKLYFKTRRIRRGLQLFLEMKREGYTY), 257-291 (DGYAYFAVVSALIKTGRTKEAYEYMQELVRKGRRH), 292-326 (DIVSYNTLLNLYFKDGNLDAVDDLLGEIERRGMKA), 327-361 (DEYTHTIIVNGLLRTGQTRRAEEHFVSMGEMGIGL), 362-392 (NLVTCNCLVDGLCKAGHVDRAMRYFESMEVK), and 393-427 (DEYTYTSVVHNLCKDMRFVCASKLLLSCYNKGIKI).

It belongs to the PPR family. P subfamily.

The chain is Putative pentatricopeptide repeat-containing protein At4g17915 from Arabidopsis thaliana (Mouse-ear cress).